Here is a 313-residue protein sequence, read N- to C-terminus: Expansin-like A4 (313 aa).

A signal peptide spans M1–A30. The region spanning G59 to S173 is the Expansin-like EG45 domain. N124 carries an N-linked (GlcNAc...) asparagine glycan. One can recognise an Expansin-like CBD domain in the interval T188–T281.

Belongs to the expansin family. Expansin-like A subfamily.

Its subcellular location is the secreted. This is Expansin-like A4 (EXLA4) from Oryza sativa subsp. japonica (Rice).